A 90-amino-acid chain; its full sequence is MKTAIFTVVLALAVFAVLSFGWEANEKALSEEFTELIHEKEAASETEARECRYFWGECHDHMPCCDWLVCRYKWPITYNICVWNRTFPEK.

The signal sequence occupies residues 1 to 19 (MKTAIFTVVLALAVFAVLS). Residues 20–50 (FGWEANEKALSEEFTELIHEKEAASETEARE) constitute a propeptide that is removed on maturation. Disulfide bonds link C51-C65, C58-C70, and C64-C81.

It belongs to the neurotoxin 10 (Hwtx-1) family. 13 (Hntx-13) subfamily. In terms of tissue distribution, expressed by the venom gland.

It localises to the secreted. Its function is as follows. Ion channel inhibitor. The chain is U7-theraphotoxin-Hhn1a 1 from Cyriopagopus hainanus (Chinese bird spider).